Reading from the N-terminus, the 111-residue chain is uncharacterized protein (111 aa).

Transmembrane regions (helical) follow at residues 7-29 (LYSS…RALY) and 49-71 (PSLL…SINL).

The protein resides in the membrane. This is an uncharacterized protein from Saccharomyces cerevisiae (strain ATCC 204508 / S288c) (Baker's yeast).